Reading from the N-terminus, the 670-residue chain is MAFPVDMLENCSHEELENSAEDYMSDLRCGDPENPECFSLLNITIPISLSNVGFVPLYGGDQTQKILALFAPEDSLTAVALYLADQWWAIDDIVKTSVPSREGLKQVSTLGERVVLYVLNRIIYRKQEMERNEIPFLCHSSTDYAKILWKKGEAIGFYSVKPTGSICASFLTQSYQLPVLDTMFLRKKYRGKDFGLHMLEDFVDSFTEDALGLRYPLSSLMYTACKQYFEKYPGDHELLWEVEGVGHWYQRIPVTRALQREALKILALSQNEPKRPMSGEYGPASVPEYEARTEDNQSSEMQLTIDSLKDAFASTSEGHDKTSVSTHTRSGNLKRPKIGKRFQDSEFSSSQGEDEKTSQTSLTASINKLESTARPSESSEEFLEEEPEQRGIEFEDESSDRDARPALETQPQQEKQDGEKESELEPMNGEIMDDSLKTSLITEEEDSTSEVLDEELKLQPFNSSEDSTNLVPLVVESSKPPEVDAPDKTPRIPDSEMLMDEGTSDEKGHMEEKLSLLPRKKAHLGSSDNVATMSNEERSDGGFPNSVIAEFSEEPVSENLSPNTTSSLEDQGEEGVSEPQETSTALPQSSLIEVELEDVPFSQNAGQKNQSEEQSEASSEQLDQFTQSAEKAVDSSSEEIEVEVPVVDRRNLRRKAKGHKGPAKKKAKLT.

Disordered regions lie at residues 273–301 and 314–670; these read PKRPMSGEYGPASVPEYEARTEDNQSSEM and STSE…AKLT. Residue Ser350 is modified to Phosphoserine. The span at 358–375 shows a compositional bias: polar residues; sequence SQTSLTASINKLESTARP. The span at 378–387 shows a compositional bias: acidic residues; the sequence is SSEEFLEEEP. Ser379 is modified (phosphoserine). Over residues 414 to 423 the composition is skewed to basic and acidic residues; the sequence is EKQDGEKESE. A compositionally biased stretch (acidic residues) spans 442 to 453; it reads TEEEDSTSEVLD. The residue at position 449 (Ser449) is a Phosphoserine. The span at 460–470 shows a compositional bias: polar residues; it reads PFNSSEDSTNL. 2 stretches are compositionally biased toward basic and acidic residues: residues 479–494 and 504–514; these read KPPEVDAPDKTPRIPD and SDEKGHMEEKL. Ser515 carries the phosphoserine modification. 2 stretches are compositionally biased toward polar residues: residues 558 to 569 and 579 to 591; these read ENLSPNTTSSLE and PQETSTALPQSSL. Phosphoserine occurs at positions 615, 618, and 635. Residues 651–670 show a composition bias toward basic residues; that stretch reads NLRRKAKGHKGPAKKKAKLT.

This sequence belongs to the FAM169 family.

It localises to the nucleus envelope. It is found in the nucleus inner membrane. The protein is Soluble lamin-associated protein of 75 kDa (FAM169A) of Homo sapiens (Human).